The sequence spans 178 residues: MSGGKYVDSEGHLYTVPVREQGNIYKPNNKAMAEEMNEKQVYDAHTKEIDLVNRDPKHLNDDVVKIDFEDVIAEPEGTHSFDGIWKASFTTFTVTKYWFYRLLSALFGIPMALIWGIYFAILSFLHIWAVVPCIKSFLIEIQCISRVYSIYVHTFCDPLFEAIGKIFSNIRINMQKEI.

S2 carries the N-acetylserine modification. S2 carries the phosphoserine modification. Residues 2–94 (SGGKYVDSEG…WKASFTTFTV (93 aa)) form a required for homooligomerization region. At 2-104 (SGGKYVDSEG…TKYWFYRLLS (103 aa)) the chain is on the cytoplasmic side. At K5 the chain carries N6-acetyllysine; alternate. A Glycyl lysine isopeptide (Lys-Gly) (interchain with G-Cter in ubiquitin); alternate cross-link involves residue K5. Y6 carries the post-translational modification Phosphotyrosine. S9 carries the phosphoserine modification. The residue at position 14 (Y14) is a Phosphotyrosine; by ABL1. Y25 bears the Phosphotyrosine mark. Glycyl lysine isopeptide (Lys-Gly) (interchain with G-Cter in ubiquitin) cross-links involve residues K26, K30, K39, K47, and K57. The segment at 82-94 (DGIWKASFTTFTV) is interaction with CAVIN3. The segment at residues 105 to 125 (ALFGIPMALIWGIYFAILSFL) is an intramembrane region (helical). Residues 126-178 (HIWAVVPCIKSFLIEIQCISRVYSIYVHTFCDPLFEAIGKIFSNIRINMQKEI) are Cytoplasmic-facing. The interacts with SPRY1, SPRY2, SPRY3 and SPRY4 stretch occupies residues 131-142 (VPCIKSFLIEIQ). S-palmitoyl cysteine attachment occurs at residues C133, C143, and C156. The segment at 149 to 160 (SIYVHTFCDPLF) is interacts with SPRY1, SPRY2, and SPRY4. The tract at residues 167-178 (FSNIRINMQKEI) is interacts with SPRY1, SPRY2, SPRY3 and SPRY4.

Belongs to the caveolin family. Homooligomer. Interacts with GLIPR2. Interacts with NOSTRIN. Interacts with SNAP25 and STX1A. Interacts (via the N-terminus) with DPP4; the interaction is direct. Interacts with CTNNB1, CDH1 and JUP. Interacts with PACSIN2; this interaction induces membrane tubulation. Interacts with SLC7A9. Interacts with BMX and BTK. Interacts with TGFBR1. Interacts with CAVIN3 (via leucine-zipper domain) in a cholesterol-sensitive manner. Interacts with CAVIN1. Interacts with EHD2 in a cholesterol-dependent manner. Forms a ternary complex with UBXN6 and VCP; mediates CAV1 targeting to lysosomes for degradation. Interacts with ABCG1; this interaction regulates ABCG1-mediated cholesterol efflux. Interacts with NEU3; this interaction enhances NEU3 sialidase activity within caveola. Interacts (via C-terminus) with SPRY1, SPRY2 (via C-terminus), SPRY3, and SPRY4. Interacts with IGFBP5; this interaction allows trafficking of IGFBP5 from the plasma membrane to the nucleus. Post-translationally, phosphorylated at Tyr-14 by ABL1 in response to oxidative stress. Ubiquitinated. Undergo monoubiquitination and multi- and/or polyubiquitination. Monoubiquitination of N-terminal lysines promotes integration in a ternary complex with UBXN6 and VCP which promotes oligomeric CAV1 targeting to lysosomes for degradation. Ubiquitinated by ZNRF1; leading to degradation and modulation of the TLR4-mediated immune response.

It localises to the golgi apparatus membrane. The protein localises to the cell membrane. Its subcellular location is the membrane. The protein resides in the caveola. It is found in the membrane raft. Its function is as follows. May act as a scaffolding protein within caveolar membranes. Forms a stable heterooligomeric complex with CAV2 that targets to lipid rafts and drives caveolae formation. Mediates the recruitment of CAVIN proteins (CAVIN1/2/3/4) to the caveolae. Interacts directly with G-protein alpha subunits and can functionally regulate their activity. Involved in the costimulatory signal essential for T-cell receptor (TCR)-mediated T-cell activation. Its binding to DPP4 induces T-cell proliferation and NF-kappa-B activation in a T-cell receptor/CD3-dependent manner. Recruits CTNNB1 to caveolar membranes and may regulate CTNNB1-mediated signaling through the Wnt pathway. Negatively regulates TGFB1-mediated activation of SMAD2/3 by mediating the internalization of TGFBR1 from membrane rafts leading to its subsequent degradation. Binds 20(S)-hydroxycholesterol (20(S)-OHC). The sequence is that of Caveolin-1 (CAV1) from Muntiacus reevesi (Reeves' muntjac).